The sequence spans 477 residues: Zinc metalloproteinase/disintegrin (477 aa).

Positions 1–19 (MIQVLLVIICLAVPYQGSS) are cleaved as a signal peptide. Positions 20–186 (IILESGNVND…PIKKASQSNL (167 aa)) are excised as a propeptide. Residues 192–388 (RYIELVIVAD…QKPQCILNKP (197 aa)) enclose the Peptidase M12B domain. Ca(2+) contacts are provided by Glu-195 and Asp-279. Cystine bridges form between Cys-303-Cys-383, Cys-343-Cys-367, and Cys-345-Cys-350. His-328 lines the Zn(2+) pocket. The active site involves Glu-329. Positions 332 and 338 each coordinate Zn(2+). 2 residues coordinate Ca(2+): Cys-383 and Asn-386. A propeptide spanning residues 389-404 (LRTDTVSTPVSGNELL) is cleaved from the precursor. In terms of domain architecture, Disintegrin spans 396-477 (TPVSGNELLE…AGCPRNPFHA (82 aa)). Cystine bridges form between Cys-410–Cys-425, Cys-412–Cys-420, Cys-419–Cys-442, Cys-433–Cys-439, Cys-438–Cys-463, and Cys-451–Cys-470. The short motif at 455–457 (RGD) is the Cell attachment site element.

The protein belongs to the venom metalloproteinase (M12B) family. P-II subfamily. P-IIa sub-subfamily. In terms of assembly, monomer. Zn(2+) is required as a cofactor. As to expression, expressed by the venom gland.

The protein resides in the secreted. Its function is as follows. Impairs hemostasis in the envenomed animal. In terms of biological role, inhibits platelet aggregation induced by ADP, thrombin, platelet-activating factor and collagen. Acts by inhibiting fibrinogen interaction with platelet receptors GPIIb/GPIIIa (ITGA2B/ITGB3). This is Zinc metalloproteinase/disintegrin from Gloydius halys (Chinese water mocassin).